The primary structure comprises 239 residues: Purine nucleoside phosphorylase DeoD-type (239 aa).

His-5 is an a purine D-ribonucleoside binding site. Phosphate contacts are provided by residues Gly-21, Arg-25, Arg-44, and Arg-88–Ser-91. A purine D-ribonucleoside-binding positions include Glu-180–Glu-182 and Ser-204–Asp-205. Asp-205 acts as the Proton donor in catalysis.

The protein belongs to the PNP/UDP phosphorylase family. As to quaternary structure, homohexamer; trimer of homodimers.

The catalysed reaction is a purine D-ribonucleoside + phosphate = a purine nucleobase + alpha-D-ribose 1-phosphate. It carries out the reaction a purine 2'-deoxy-D-ribonucleoside + phosphate = a purine nucleobase + 2-deoxy-alpha-D-ribose 1-phosphate. In terms of biological role, catalyzes the reversible phosphorolytic breakdown of the N-glycosidic bond in the beta-(deoxy)ribonucleoside molecules, with the formation of the corresponding free purine bases and pentose-1-phosphate. This is Purine nucleoside phosphorylase DeoD-type from Salmonella gallinarum (strain 287/91 / NCTC 13346).